A 292-amino-acid chain; its full sequence is Putative pyruvate, phosphate dikinase regulatory protein (292 aa).

155–162 (GVSRSSKT) lines the ADP pocket.

This sequence belongs to the pyruvate, phosphate/water dikinase regulatory protein family. PDRP subfamily.

The catalysed reaction is N(tele)-phospho-L-histidyl/L-threonyl-[pyruvate, phosphate dikinase] + ADP = N(tele)-phospho-L-histidyl/O-phospho-L-threonyl-[pyruvate, phosphate dikinase] + AMP + H(+). It catalyses the reaction N(tele)-phospho-L-histidyl/O-phospho-L-threonyl-[pyruvate, phosphate dikinase] + phosphate + H(+) = N(tele)-phospho-L-histidyl/L-threonyl-[pyruvate, phosphate dikinase] + diphosphate. Functionally, bifunctional serine/threonine kinase and phosphorylase involved in the regulation of the pyruvate, phosphate dikinase (PPDK) by catalyzing its phosphorylation/dephosphorylation. This is Putative pyruvate, phosphate dikinase regulatory protein from Acidiphilium cryptum (strain JF-5).